The following is a 491-amino-acid chain: (R)-citramalate synthase CimA (491 aa).

Positions 3 to 254 (VRIFDTTLRD…DTKIKMEKLY (252 aa)) constitute a Pyruvate carboxyltransferase domain.

It belongs to the alpha-IPM synthase/homocitrate synthase family. Homodimer.

The catalysed reaction is pyruvate + acetyl-CoA + H2O = (3R)-citramalate + CoA + H(+). The protein operates within amino-acid biosynthesis; L-isoleucine biosynthesis; 2-oxobutanoate from pyruvate: step 1/3. Its function is as follows. Catalyzes the condensation of pyruvate and acetyl-coenzyme A to form (R)-citramalate. This chain is (R)-citramalate synthase CimA (cimA), found in Methanocaldococcus jannaschii (strain ATCC 43067 / DSM 2661 / JAL-1 / JCM 10045 / NBRC 100440) (Methanococcus jannaschii).